The following is a 1333-amino-acid chain: snRNA-activating protein complex subunit 4 (1333 aa).

Positions 29–84 (HFEVSESSLSSDSEADSLPDEDLETAGAPILEEEGSSESSNDEEDPKDKALPEDPE) are disordered. 2 stretches are compositionally biased toward acidic residues: residues 41-52 (SEADSLPDEDLE) and 59-73 (LEEEGSSESSNDEED). Ser-68 is modified (phosphoserine). The SNAPC5-binding stretch occupies residues 84–133 (ETCLQLNMVYQEVIREKLAEVSQLLAQNQEQQEEILFDLSGTKCPKVKDG). A Myb-like 1 domain is found at 250–288 (EEALLGNRLDSHDWEKISNINFEGARSAEEIRKFWQSSE). Residues 289-343 (HPSISKQEWSTEEVERLKAIAATHGHLEWHLVAEELGTSRSAFQCLQKFQQYNKT) form the HTH myb-type 1 domain. The H-T-H motif DNA-binding region spans 317–341 (WHLVAEELGTSRSAFQCLQKFQQYN). Residues 344–395 (LKRKEWTEEEDHMLTQLVQEMRVGNHIPYRKIVYFMEGRDSMQLIYRWTKSL) enclose the Myb-like 2 domain. 2 consecutive HTH myb-type domains span residues 396–451 (DPSL…HFSL) and 452–503 (KKGR…RKKQ). 2 consecutive DNA-binding regions (H-T-H motif) follow at residues 424 to 447 (WFKIREEVPGRSDAQCRDRYIRRL) and 476 to 499 (WARIASELPHRSGSQCLSKWKILA). The segment covering 503-515 (QHLQRKRGQRPRH) has biased composition (basic residues). 4 disordered regions span residues 503-558 (QHLQ…LEKS), 662-702 (LMKE…QNKQ), 811-842 (NAKNNTGCLPSMTGEQTAKRASHKGRPRLGSC), and 1079-1117 (LPSPAKTPAFLEQPPASTDTEPKGPQGQEIPPTPGPEKA). Positions 516-546 (SSQWSSSGSSSSSSEDYGSSSGSDGSSGSEN) are enriched in low complexity. Composition is skewed to polar residues over residues 672–686 (LPSSRSGSDPGNNTA) and 811–826 (NAKNNTGCLPSMTGEQ). An SNAPC2-binding region spans residues 1131-1247 (AIVTWLKGCQ…NSIPTTLSPD (117 aa)). Phosphoserine is present on residues Ser-1252, Ser-1254, Ser-1301, and Ser-1309. Residues 1282-1333 (PAAPDPVQSHLVSPGQRAPSPGEVSAPSPLDASDGLDDLNVLRTRRARHSRR) are disordered. A compositionally biased stretch (basic residues) spans 1324-1333 (RTRRARHSRR).

In terms of assembly, part of the SNAPc composed of 5 subunits: SNAPC1, SNAPC2, SNAPC3, SNAPC4 and SNAPC5. SNAPC4 interacts with SNAPC1, SNAPC2, SNAPC5, BRF2 and TBP.

It is found in the nucleus. In terms of biological role, part of the SNAPc complex required for the transcription of both RNA polymerase II and III small-nuclear RNA genes. Binds to the proximal sequence element (PSE), a non-TATA-box basal promoter element common to these 2 types of genes. Recruits TBP and BRF2 to the U6 snRNA TATA box. The sequence is that of snRNA-activating protein complex subunit 4 from Mus musculus (Mouse).